Here is a 689-residue protein sequence, read N- to C-terminus: Protein CFAP20DC (689 aa).

Disordered stretches follow at residues 241-263, 333-423, and 584-659; these read LKSTSRERTETPSGSSSGNNRIE, SKES…GPSE, and ISTS…DLSV. Polar residues-rich tracts occupy residues 251–260 and 343–359; these read TPSGSSSGNN and EESQSVPKDIFTFSSRP. Residues 394–405 are compositionally biased toward acidic residues; that stretch reads SEDDFYGGDSSE. Residues 409–421 show a composition bias toward polar residues; that stretch reads HSIQGSRGPTTGP. The segment covering 584 to 593 has biased composition (low complexity); the sequence is ISTSSDDTTT.

The polypeptide is Protein CFAP20DC (Homo sapiens (Human)).